A 477-amino-acid chain; its full sequence is Zinc metalloproteinase/disintegrin (477 aa).

An N-terminal signal peptide occupies residues 1 to 20 (MIEVLLVTICLAAFPYQGSS). Positions 21 to 187 (IILESGNVND…PIKKASQSNL (167 aa)) are excised as a propeptide. A Peptidase M12B domain is found at 193-389 (RYIELFLVVD…DNPQCILNKQ (197 aa)). Glu-196 and Asp-280 together coordinate Ca(2+). Disulfide bonds link Cys-304–Cys-384, Cys-344–Cys-368, and Cys-346–Cys-351. His-329 lines the Zn(2+) pocket. Glu-330 is an active-site residue. Zn(2+)-binding residues include His-333 and His-339. The Ca(2+) site is built by Cys-384 and Asn-387. Positions 390–404 (LRTDTVSTPVSGKNF) are excised as a propeptide. In terms of domain architecture, Disintegrin spans 396-477 (STPVSGKNFG…AGCPRNPFHA (82 aa)). 6 cysteine pairs are disulfide-bonded: Cys-410-Cys-425, Cys-412-Cys-420, Cys-419-Cys-442, Cys-433-Cys-439, Cys-438-Cys-463, and Cys-451-Cys-470. Positions 455–457 (RGD) match the Cell attachment site motif.

The protein belongs to the venom metalloproteinase (M12B) family. P-II subfamily. P-IIa sub-subfamily. As to quaternary structure, monomer. Requires Zn(2+) as cofactor. In terms of tissue distribution, expressed by the venom gland.

It is found in the secreted. With respect to regulation, inhibited by 1,10-phenanthroline and EDTA. Functionally, impairs hemostasis in the envenomed animal. Does not exhibit detectable plasminogen activating activity. Has hemagglutinating activity on red blood cells. Cleaves insulin B chain at '38-Ala-|-Leu-39' and '40-Tyr-|-Leu-41' bonds. Its function is as follows. This recombinant protein shows high inhibitory activity on collagen-induced platelet aggregation. This chain is Zinc metalloproteinase/disintegrin, found in Bothrops jararaca (Jararaca).